A 380-amino-acid polypeptide reads, in one-letter code: Putative 8-amino-7-oxononanoate synthase (380 aa).

Arginine 18 contributes to the substrate binding site. 106–107 contacts pyridoxal 5'-phosphate; the sequence is GY. Histidine 131 provides a ligand contact to substrate. Pyridoxal 5'-phosphate-binding positions include serine 179, 205–208, and 236–239; these read DEAH and TFGK. The residue at position 239 (lysine 239) is an N6-(pyridoxal phosphate)lysine. Residue threonine 352 participates in substrate binding.

The protein belongs to the class-II pyridoxal-phosphate-dependent aminotransferase family. BioF subfamily. As to quaternary structure, homodimer. Pyridoxal 5'-phosphate serves as cofactor.

It carries out the reaction 6-carboxyhexanoyl-[ACP] + L-alanine + H(+) = (8S)-8-amino-7-oxononanoate + holo-[ACP] + CO2. It functions in the pathway cofactor biosynthesis; biotin biosynthesis. In terms of biological role, catalyzes the decarboxylative condensation of pimeloyl-[acyl-carrier protein] and L-alanine to produce 8-amino-7-oxononanoate (AON), [acyl-carrier protein], and carbon dioxide. The sequence is that of Putative 8-amino-7-oxononanoate synthase (bioF) from Neisseria meningitidis serogroup C (strain 053442).